Here is a 1526-residue protein sequence, read N- to C-terminus: DNA topoisomerase 2-alpha (1526 aa).

At Met-1 the chain carries N-acetylmethionine. The disordered stretch occupies residues 1–21 (MELSPLQPVNENMQMNKKKNE). At Ser-4 the chain carries Phosphoserine. Lys-17 is covalently cross-linked (Glycyl lysine isopeptide (Lys-Gly) (interchain with G-Cter in SUMO2)). ATP is bound by residues Asn-90, Asn-119, and 147–149 (SSN). Residues Lys-155 and Lys-156 each participate in a glycyl lysine isopeptide (Lys-Gly) (interchain with G-Cter in SUMO2) cross-link. Residue 160 to 167 (GRNGYGAK) coordinates ATP. Residue Lys-260 forms a Glycyl lysine isopeptide (Lys-Gly) (interchain with G-Cter in SUMO2) linkage. Thr-281 carries the post-translational modification Phosphothreonine. Positions 341–343 (KKK) are interaction with DNA. Residue Lys-351 forms a Glycyl lysine isopeptide (Lys-Gly) (interchain with G-Cter in SUMO2) linkage. 375–377 (QTK) contributes to the ATP binding site. Residues Lys-385, Lys-396, Lys-415, Lys-417, Lys-424, and Lys-439 each participate in a glycyl lysine isopeptide (Lys-Gly) (interchain with G-Cter in SUMO2) cross-link. A Toprim domain is found at 454 to 571 (CTLILTEGDS…SLLRHRFLEE (118 aa)). Glu-460 contacts Mg(2+). Residues Lys-465, Lys-479, and Lys-528 each participate in a glycyl lysine isopeptide (Lys-Gly) (interchain with G-Cter in SUMO2) cross-link. Positions 540 and 542 each coordinate Mg(2+). Glycyl lysine isopeptide (Lys-Gly) (interchain with G-Cter in SUMO2) cross-links involve residues Lys-583, Lys-598, Lys-613, Lys-621, Lys-624, Lys-631, Lys-638, Lys-654, Lys-661, and Lys-675. Residues 714-1166 (IPSMVDGLKP…SPSDLWKEDL (453 aa)) enclose the Topo IIA-type catalytic domain. Tyr-804 serves as the catalytic O-(5'-phospho-DNA)-tyrosine intermediate. Residues 989–998 (KLQTSLTCNS) form an interaction with DNA region. A Glycyl lysine isopeptide (Lys-Gly) (interchain with G-Cter in SUMO2) cross-link involves residue Lys-1074. Disordered stretches follow at residues 1089–1117 (WKEA…AESG) and 1180–1217 (EKQD…VIPQ). Positions 1098 to 1109 (DEEENEESDNEN) are enriched in acidic residues. The residue at position 1105 (Ser-1105) is a Phosphoserine; by CK1. Glycyl lysine isopeptide (Lys-Gly) (interchain with G-Cter in SUMO2) cross-links involve residues Lys-1191 and Lys-1199. A Phosphoserine modification is found at Ser-1208. A Glycyl lysine isopeptide (Lys-Gly) (interchain with G-Cter in SUMO2) cross-link involves residue Lys-1223. The tract at residues 1233-1526 (KIKSENVEGT…LEESDDDDLF (294 aa)) is disordered. Lys-1235 participates in a covalent cross-link: Glycyl lysine isopeptide (Lys-Gly) (interchain with G-Cter in SUMO1); alternate. Residue Lys-1235 forms a Glycyl lysine isopeptide (Lys-Gly) (interchain with G-Cter in SUMO2); alternate linkage. At Thr-1242 the chain carries Phosphothreonine. Lys-1254 is covalently cross-linked (Glycyl lysine isopeptide (Lys-Gly) (interchain with G-Cter in SUMO2)). Basic and acidic residues predominate over residues 1255-1265 (QRIEKKQKKEP). Residues Lys-1271, Lys-1278, and Lys-1281 each participate in a glycyl lysine isopeptide (Lys-Gly) (interchain with G-Cter in SUMO2) cross-link. A phosphoserine mark is found at Ser-1290, Ser-1292, Ser-1294, and Ser-1297. Thr-1322 carries the phosphothreonine modification. Residues 1325-1344 (LDSDEDFSGSDGKDEDEDFF) are compositionally biased toward acidic residues. Phosphoserine is present on residues Ser-1327 and Ser-1332. The residue at position 1349 (Thr-1349) is a Phosphothreonine. Glycyl lysine isopeptide (Lys-Gly) (interchain with G-Cter in SUMO2) cross-links involve residues Lys-1358, Lys-1362, and Lys-1368. Phosphoserine is present on residues Ser-1369 and Ser-1372. Residue Lys-1380 forms a Glycyl lysine isopeptide (Lys-Gly) (interchain with G-Cter in SUMO2) linkage. Residues Ser-1382 and Ser-1386 each carry the phosphoserine modification. Residues 1405-1426 (SKQTVAVKKTATKSQSSTSTAG) show a composition bias toward low complexity. Lys-1417 is covalently cross-linked (Glycyl lysine isopeptide (Lys-Gly) (interchain with G-Cter in SUMO2); alternate). At Lys-1417 the chain carries N6-acetyllysine; alternate. Positions 1428 to 1434 (KKRAVPK) are interaction with PLSCR1. A Glycyl lysine isopeptide (Lys-Gly) (interchain with G-Cter in SUMO2); alternate cross-link involves residue Lys-1437. N6-acetyllysine; alternate is present on Lys-1437. Glycyl lysine isopeptide (Lys-Gly) (interchain with G-Cter in SUMO2) cross-links involve residues Lys-1449 and Lys-1454. Phosphoserine is present on residues Ser-1464, Ser-1466, Ser-1469, and Ser-1471. Glycyl lysine isopeptide (Lys-Gly) (interchain with G-Cter in SUMO2) cross-links involve residues Lys-1479 and Lys-1487. A compositionally biased stretch (basic and acidic residues) spans 1486–1497 (SKGENQDFRVDL). A Phosphoserine modification is found at Ser-1520.

This sequence belongs to the type II topoisomerase family. In terms of assembly, homodimer. Interacts with COPS5. Interacts with RECQL5; this stimulates DNA decatenation. Interacts with SETMAR; stimulates the topoisomerase activity. Interacts with DHX9; this interaction occurs in a E2 enzyme UBE2I- and RNA-dependent manner, negatively regulates DHX9-mediated double-stranded DNA and RNA duplex helicase activity and stimulates TOP2A-mediated supercoiled DNA relaxation activity. Interacts with HNRNPU (via C-terminus); this interaction protects the topoisomerase TOP2A from degradation and positively regulates the relaxation of supercoiled DNA in a RNA-dependent manner. Interacts with MCM3AP. Interacts with ERCC6. Interacts with PLSCR1. Interacts with GCNA; this interaction allows the resolution of topoisomerase II (TOP2A) DNA-protein cross-links. Interacts with POL1RA/RPA1 (via dock II) and UBTF in the context of Pol I complex; may assist Pol I transcription initiation by releasing supercoils occurring during DNA unwinding. Interacts with TPRN; TPRN interacts with a number of DNA damage response proteins, is recruited to sites of DNA damage and may play a role in DNA damage repair. Mg(2+) serves as cofactor. It depends on Mn(2+) as a cofactor. The cofactor is Ca(2+). In terms of processing, phosphorylation has no effect on catalytic activity. However, phosphorylation at Ser-1105 by CSNK1D/CK1 promotes DNA cleavable complex formation.

The protein resides in the cytoplasm. Its subcellular location is the nucleus. It localises to the nucleoplasm. It is found in the nucleolus. The catalysed reaction is ATP-dependent breakage, passage and rejoining of double-stranded DNA.. In terms of biological role, key decatenating enzyme that alters DNA topology by binding to two double-stranded DNA molecules, generating a double-stranded break in one of the strands, passing the intact strand through the broken strand, and religating the broken strand. May play a role in regulating the period length of BMAL1 transcriptional oscillation. The polypeptide is DNA topoisomerase 2-alpha (TOP2A) (Cricetulus griseus (Chinese hamster)).